Consider the following 424-residue polypeptide: Adenylosuccinate synthetase (424 aa).

Residues 12 to 18 (GDEGKGK) and 40 to 42 (GHT) contribute to the GTP site. The Proton acceptor role is filled by aspartate 13. Residues aspartate 13 and glycine 40 each coordinate Mg(2+). Residues 13–16 (DEGK), 38–41 (NAGH), threonine 130, arginine 144, asparagine 220, threonine 235, and arginine 299 contribute to the IMP site. The active-site Proton donor is the histidine 41. Substrate is bound at residue 295 to 301 (VTTGRRR). Residues arginine 301, 327 to 329 (KLD), and 412 to 414 (GTG) each bind GTP.

Belongs to the adenylosuccinate synthetase family. As to quaternary structure, homodimer. Requires Mg(2+) as cofactor.

The protein localises to the cytoplasm. It carries out the reaction IMP + L-aspartate + GTP = N(6)-(1,2-dicarboxyethyl)-AMP + GDP + phosphate + 2 H(+). Its pathway is purine metabolism; AMP biosynthesis via de novo pathway; AMP from IMP: step 1/2. Its function is as follows. Plays an important role in the de novo pathway and in the salvage pathway of purine nucleotide biosynthesis. Catalyzes the first committed step in the biosynthesis of AMP from IMP. This is Adenylosuccinate synthetase from Neosartorya fischeri (strain ATCC 1020 / DSM 3700 / CBS 544.65 / FGSC A1164 / JCM 1740 / NRRL 181 / WB 181) (Aspergillus fischerianus).